The following is a 401-amino-acid chain: MARPDLHERISSLRKLRVAQERVRVRRQVGRRDGVRLEIDGRWLTGFCSNDYLGLSQQFEVVAALQDAAARDGAGATASHLICGHHTAHETLERDIAEWLGYPSALLFGSGFIANLAVQQALLSEEDDVCVQDRLNHASLLDATRLAGCRLRRYPHLDVEGAMRQLKGAPEGAAMLASDGVFSMDGDVAPLRALSLVARMQEALFYVDDAHGVGVLGPQGRGCVADAGLGVAEVPLQLVTLGKALGGYGAVVVGEEALIRHLAETARPYIYTTALPPAQVAATLAAVRLARRDDWRRTRLTELIGTFRDGARRHGFELMASDTPIQPLLCGEEATVMAMSAALEQAGFLVGAIRPPTVPEGKARLRVTLSALHTPQQVQALVDAIVQARDVVSRQPQRALA.

Arg24 serves as a coordination point for substrate. 111–112 (GF) lines the pyridoxal 5'-phosphate pocket. Substrate is bound at residue His137. Pyridoxal 5'-phosphate contacts are provided by Ser183, His211, and Thr240. Lys243 bears the N6-(pyridoxal phosphate)lysine mark. Thr357 serves as a coordination point for substrate.

The protein belongs to the class-II pyridoxal-phosphate-dependent aminotransferase family. BioF subfamily. Homodimer. It depends on pyridoxal 5'-phosphate as a cofactor.

It carries out the reaction 6-carboxyhexanoyl-[ACP] + L-alanine + H(+) = (8S)-8-amino-7-oxononanoate + holo-[ACP] + CO2. It participates in cofactor biosynthesis; biotin biosynthesis. In terms of biological role, catalyzes the decarboxylative condensation of pimeloyl-[acyl-carrier protein] and L-alanine to produce 8-amino-7-oxononanoate (AON), [acyl-carrier protein], and carbon dioxide. The sequence is that of 8-amino-7-oxononanoate synthase from Xanthomonas campestris pv. campestris (strain B100).